A 299-amino-acid polypeptide reads, in one-letter code: Probable lipid kinase YegS-like (299 aa).

The 132-residue stretch at 2 to 133 (SRSAGSFLIL…IDIAHVNDKT (132 aa)) folds into the DAGKc domain. Residues threonine 40, 66–72 (GDGTINE), and threonine 95 contribute to the ATP site. Leucine 215, aspartate 218, and leucine 220 together coordinate Mg(2+). Catalysis depends on glutamate 271, which acts as the Proton acceptor.

This sequence belongs to the diacylglycerol/lipid kinase family. YegS lipid kinase subfamily. It depends on Mg(2+) as a cofactor. The cofactor is Ca(2+).

It localises to the cytoplasm. Probably phosphorylates lipids; the in vivo substrate is unknown. The protein is Probable lipid kinase YegS-like of Cronobacter sakazakii (strain ATCC BAA-894) (Enterobacter sakazakii).